The sequence spans 372 residues: Queuine tRNA-ribosyltransferase (372 aa).

Catalysis depends on D92, which acts as the Proton acceptor. Substrate contacts are provided by residues 92–96 (DSGGF), D146, Q188, and G215. Residues 246–252 (GIGTLRE) form an RNA binding region. D265 serves as the catalytic Nucleophile. Residues 270-274 (TRLGR) form an RNA binding; important for wobble base 34 recognition region. 4 residues coordinate Zn(2+): C303, C305, C308, and H334.

This sequence belongs to the queuine tRNA-ribosyltransferase family. As to quaternary structure, homodimer. Within each dimer, one monomer is responsible for RNA recognition and catalysis, while the other monomer binds to the replacement base PreQ1. The cofactor is Zn(2+).

The catalysed reaction is 7-aminomethyl-7-carbaguanine + guanosine(34) in tRNA = 7-aminomethyl-7-carbaguanosine(34) in tRNA + guanine. Its pathway is tRNA modification; tRNA-queuosine biosynthesis. Its function is as follows. Catalyzes the base-exchange of a guanine (G) residue with the queuine precursor 7-aminomethyl-7-deazaguanine (PreQ1) at position 34 (anticodon wobble position) in tRNAs with GU(N) anticodons (tRNA-Asp, -Asn, -His and -Tyr). Catalysis occurs through a double-displacement mechanism. The nucleophile active site attacks the C1' of nucleotide 34 to detach the guanine base from the RNA, forming a covalent enzyme-RNA intermediate. The proton acceptor active site deprotonates the incoming PreQ1, allowing a nucleophilic attack on the C1' of the ribose to form the product. After dissociation, two additional enzymatic reactions on the tRNA convert PreQ1 to queuine (Q), resulting in the hypermodified nucleoside queuosine (7-(((4,5-cis-dihydroxy-2-cyclopenten-1-yl)amino)methyl)-7-deazaguanosine). This Synechococcus sp. (strain CC9311) protein is Queuine tRNA-ribosyltransferase.